The sequence spans 311 residues: Acetaldehyde dehydrogenase 2 (311 aa).

NAD(+) is bound at residue S11–I14. C131 functions as the Acyl-thioester intermediate in the catalytic mechanism. Residues S162–N170 and N289 contribute to the NAD(+) site.

It belongs to the acetaldehyde dehydrogenase family.

It catalyses the reaction acetaldehyde + NAD(+) + CoA = acetyl-CoA + NADH + H(+). The protein is Acetaldehyde dehydrogenase 2 (mhpF) of Azotobacter vinelandii (strain DJ / ATCC BAA-1303).